Consider the following 506-residue polypeptide: MKEYRVYLERARSRQQDFLYPLIFREYIYGLAYSHNFNRSIFVENGGYDNKYSLLNVKRLITRMYQQNHLIISTNDSNKNPFLGYNKNFYSQIISEGFAIVVEIPFFLQLSSSLEEAEIIKSYKNVRSIHSIFPFLEDKFTYLNYVSDIRIPYPIHLEILVQILRYWVKDVPLFHLLRLFLYDFCNWNCFTPTKKSISTFSKSNPRLFLFLYNFYVCEYESIFLFLRNKSSHLRLKSFSVFFERIFFYAKREHLVEVFSKDFSYTLPFFKDPNIHYVRYQGKCILASKNVPFLMNKWKHYFIHLWQCFFDVWSQPRTIDINQLSEHSFQLLGYFSNVRLNRSVVRSQMLENTFLIEIVSKKLDIIVPIIPLIRSLAKAKFCNVLGHPISKPVWADSSDFDIIERFLRICRNLSHYYNGSSKKKSLYRIKYILRLSCIKTLACKHKSTVRAFLKRSGSEELLEEFFTEEEEILSLIFPRDSFTLHRFHRNRIWYLDILFSNDLVNDE.

Belongs to the intron maturase 2 family. MatK subfamily.

The protein localises to the plastid. The protein resides in the chloroplast. Functionally, usually encoded in the trnK tRNA gene intron. Probably assists in splicing its own and other chloroplast group II introns. This Trifolium resupinatum (Persian clover) protein is Maturase K.